We begin with the raw amino-acid sequence, 337 residues long: F420-dependent glucose-6-phosphate dehydrogenase 2 (337 aa).

Residue aspartate 40 coordinates coenzyme F420-(gamma-Glu)n. Histidine 41 (proton donor) is an active-site residue. Residues threonine 77 and 108 to 109 each bind coenzyme F420-(gamma-Glu)n; that span reads TG. The active-site Proton acceptor is the glutamate 110. Residues asparagine 113, 178–179, and 181–182 contribute to the coenzyme F420-(gamma-Glu)n site; these read GG and VV. Substrate contacts are provided by threonine 196, lysine 199, lysine 260, and arginine 284.

Belongs to the F420-dependent glucose-6-phosphate dehydrogenase family. Homodimer.

The catalysed reaction is oxidized coenzyme F420-(gamma-L-Glu)(n) + D-glucose 6-phosphate + H(+) = 6-phospho-D-glucono-1,5-lactone + reduced coenzyme F420-(gamma-L-Glu)(n). Catalyzes the coenzyme F420-dependent oxidation of glucose 6-phosphate (G6P) to 6-phosphogluconolactone. The polypeptide is F420-dependent glucose-6-phosphate dehydrogenase 2 (Rhodococcus jostii (strain RHA1)).